Reading from the N-terminus, the 208-residue chain is Ribosomal RNA large subunit methyltransferase E (208 aa).

S-adenosyl-L-methionine contacts are provided by Gly61, Trp63, Asp81, Asp97, and Asp122. Lys162 (proton acceptor) is an active-site residue.

Belongs to the class I-like SAM-binding methyltransferase superfamily. RNA methyltransferase RlmE family.

It is found in the cytoplasm. It carries out the reaction uridine(2552) in 23S rRNA + S-adenosyl-L-methionine = 2'-O-methyluridine(2552) in 23S rRNA + S-adenosyl-L-homocysteine + H(+). Functionally, specifically methylates the uridine in position 2552 of 23S rRNA at the 2'-O position of the ribose in the fully assembled 50S ribosomal subunit. In Pseudomonas putida (strain W619), this protein is Ribosomal RNA large subunit methyltransferase E.